A 117-amino-acid polypeptide reads, in one-letter code: NADH-quinone oxidoreductase subunit A (117 aa).

The next 3 membrane-spanning stretches (helical) occupy residues 4-24, 64-84, and 86-106; these read WIGV…GMLT, LMFV…VSFV, and LGLA…LGLW.

The protein belongs to the complex I subunit 3 family. In terms of assembly, NDH-1 is composed of 14 different subunits. Subunits NuoA, H, J, K, L, M, N constitute the membrane sector of the complex.

The protein resides in the cell membrane. It catalyses the reaction a quinone + NADH + 5 H(+)(in) = a quinol + NAD(+) + 4 H(+)(out). Functionally, NDH-1 shuttles electrons from NADH, via FMN and iron-sulfur (Fe-S) centers, to quinones in the respiratory chain. The immediate electron acceptor for the enzyme in this species is believed to be a menaquinone. Couples the redox reaction to proton translocation (for every two electrons transferred, four hydrogen ions are translocated across the cytoplasmic membrane), and thus conserves the redox energy in a proton gradient. The protein is NADH-quinone oxidoreductase subunit A of Desulforamulus reducens (strain ATCC BAA-1160 / DSM 100696 / MI-1) (Desulfotomaculum reducens).